The sequence spans 235 residues: tRNA1(Val) (adenine(37)-N6)-methyltransferase (235 aa).

The protein belongs to the methyltransferase superfamily. tRNA (adenine-N(6)-)-methyltransferase family.

The protein resides in the cytoplasm. It catalyses the reaction adenosine(37) in tRNA1(Val) + S-adenosyl-L-methionine = N(6)-methyladenosine(37) in tRNA1(Val) + S-adenosyl-L-homocysteine + H(+). Functionally, specifically methylates the adenine in position 37 of tRNA(1)(Val) (anticodon cmo5UAC). In Flavobacterium johnsoniae (strain ATCC 17061 / DSM 2064 / JCM 8514 / BCRC 14874 / CCUG 350202 / NBRC 14942 / NCIMB 11054 / UW101) (Cytophaga johnsonae), this protein is tRNA1(Val) (adenine(37)-N6)-methyltransferase.